The following is a 174-amino-acid chain: uncharacterized protein (174 aa).

An N-terminal signal peptide occupies residues 1–31 (MCCVYRMNRPASGLTVVFCGKLSGKPGPKSA). Residues 39 to 59 (KSGADDGGENPRFFSAGPRTE) form a disordered region.

This is an uncharacterized protein from Escherichia coli (strain K12).